We begin with the raw amino-acid sequence, 756 residues long: Amine oxidase [copper-containing] 2 (756 aa).

Over 1–4 (MHLK) the chain is Cytoplasmic. The chain crosses the membrane as a helical span at residues 5 to 25 (IVLAFLALSLITIFALAYVLL). The Extracellular portion of the chain corresponds to 26-756 (TSPGGSSQPP…DLPPFSYHGF (731 aa)). N133, N198, and N226 each carry an N-linked (GlcNAc...) asparagine glycan. D380 functions as the Proton acceptor in the catalytic mechanism. Cysteines 398 and 424 form a disulfide. The Schiff-base intermediate with substrate; via topaquinone role is filled by Y465. Y465 bears the 2',4',5'-topaquinone mark. H516 and H518 together coordinate Cu(2+). Ca(2+)-binding residues include D525, L526, D527, E568, E637, F659, and N661. N662 is a glycosylation site (N-linked (GlcNAc...) asparagine). The Ca(2+) site is built by E663, D669, and L670. H680 provides a ligand contact to Cu(2+). C730 and C737 form a disulfide bridge.

This sequence belongs to the copper/topaquinone oxidase family. In terms of assembly, homodimer; disulfide-linked. Probably forms heterodimers with AOC3. Cu(2+) serves as cofactor. Requires Ca(2+) as cofactor. It depends on L-topaquinone as a cofactor. In terms of processing, topaquinone (TPQ) is generated by copper-dependent autoxidation of a specific tyrosyl residue. Expressed in many tissues including adipocytes with higher expression in retina where it is active. In terms of tissue distribution, not expressed in testis. As to expression, not expressed in thymus.

It is found in the cell membrane. The protein localises to the cytoplasm. It catalyses the reaction 2-phenylethylamine + O2 + H2O = 2-phenylacetaldehyde + H2O2 + NH4(+). The catalysed reaction is tryptamine + O2 + H2O = indole-3-acetaldehyde + H2O2 + NH4(+). The enzyme catalyses tyramine + O2 + H2O = (4-hydroxyphenyl)acetaldehyde + H2O2 + NH4(+). Catalyzes the oxidative deamination of primary amines to the corresponding aldehydes with the concomitant production of hydrogen peroxide and ammonia. Has a preference for 2-phenylethylamine, tryptamine and tyramine. Could also act on methylamine and benzylamine but much less efficiently. The polypeptide is Amine oxidase [copper-containing] 2 (Homo sapiens (Human)).